A 128-amino-acid chain; its full sequence is Cytochrome c oxidase subunit 5B, mitochondrial (128 aa).

A mitochondrion-targeting transit peptide spans 1–30 (MASRLLRGVGALAAQALRRTARGAAVTRSM). Lys67 and Lys85 each carry N6-acetyllysine. Residues Cys90, Cys92, Cys112, and Cys115 each contribute to the Zn(2+) site. The residue at position 120 (Lys120) is an N6-acetyllysine.

Belongs to the cytochrome c oxidase subunit 5B family. Component of the cytochrome c oxidase (complex IV, CIV), a multisubunit enzyme composed of 14 subunits. The complex is composed of a catalytic core of 3 subunits MT-CO1, MT-CO2 and MT-CO3, encoded in the mitochondrial DNA, and 11 supernumerary subunits COX4I, COX5A, COX5B, COX6A, COX6B, COX6C, COX7A, COX7B, COX7C, COX8 and NDUFA4, which are encoded in the nuclear genome. The complex exists as a monomer or a dimer and forms supercomplexes (SCs) in the inner mitochondrial membrane with NADH-ubiquinone oxidoreductase (complex I, CI) and ubiquinol-cytochrome c oxidoreductase (cytochrome b-c1 complex, complex III, CIII), resulting in different assemblies (supercomplex SCI(1)III(2)IV(1) and megacomplex MCI(2)III(2)IV(2)).

Its subcellular location is the mitochondrion inner membrane. The protein operates within energy metabolism; oxidative phosphorylation. Its function is as follows. Component of the cytochrome c oxidase, the last enzyme in the mitochondrial electron transport chain which drives oxidative phosphorylation. The respiratory chain contains 3 multisubunit complexes succinate dehydrogenase (complex II, CII), ubiquinol-cytochrome c oxidoreductase (cytochrome b-c1 complex, complex III, CIII) and cytochrome c oxidase (complex IV, CIV), that cooperate to transfer electrons derived from NADH and succinate to molecular oxygen, creating an electrochemical gradient over the inner membrane that drives transmembrane transport and the ATP synthase. Cytochrome c oxidase is the component of the respiratory chain that catalyzes the reduction of oxygen to water. Electrons originating from reduced cytochrome c in the intermembrane space (IMS) are transferred via the dinuclear copper A center (CU(A)) of subunit 2 and heme A of subunit 1 to the active site in subunit 1, a binuclear center (BNC) formed by heme A3 and copper B (CU(B)). The BNC reduces molecular oxygen to 2 water molecules using 4 electrons from cytochrome c in the IMS and 4 protons from the mitochondrial matrix. The sequence is that of Cytochrome c oxidase subunit 5B, mitochondrial (Cox5b) from Mus musculus (Mouse).